We begin with the raw amino-acid sequence, 652 residues long: DNA ligase (652 aa).

NAD(+)-binding positions include 29-33, 78-79, and Glu-107; these read DSDYD and SL. Catalysis depends on Lys-109, which acts as the N6-AMP-lysine intermediate. Residues Arg-130, Glu-164, Lys-278, and Lys-302 each coordinate NAD(+). 4 residues coordinate Zn(2+): Cys-395, Cys-398, Cys-413, and Cys-418. Positions 577-652 constitute a BRCT domain; the sequence is NSDAALFGLT…IEDEDWLRQL (76 aa).

The protein belongs to the NAD-dependent DNA ligase family. LigA subfamily. Mg(2+) is required as a cofactor. Mn(2+) serves as cofactor.

It catalyses the reaction NAD(+) + (deoxyribonucleotide)n-3'-hydroxyl + 5'-phospho-(deoxyribonucleotide)m = (deoxyribonucleotide)n+m + AMP + beta-nicotinamide D-nucleotide.. In terms of biological role, DNA ligase that catalyzes the formation of phosphodiester linkages between 5'-phosphoryl and 3'-hydroxyl groups in double-stranded DNA using NAD as a coenzyme and as the energy source for the reaction. It is essential for DNA replication and repair of damaged DNA. This is DNA ligase from Streptococcus pyogenes serotype M4 (strain MGAS10750).